The chain runs to 388 residues: MKIHEYQGKEILRKFGVAVPRGKPAFSVDEAVKVAEELGGPVWVVKAQIHAGGRGKGGGVKVAKSLEQVREYANQILGMQLVTHQTGPEGQKVNRLLIEEGADIKQELYVSLVVDRISQKIVLMGSSEGGMDIEEVAEKHPELIHKVIVEPSTGLLDSQADDLATKIGVPAASIPQARAILQGLYKAFWETDASLAEINPLNVSGDGKVVALDAKFNFDSNALFRHPEIVAYRDLDEEDPAEIEASKFDLAYISLDGNIGCLVNGAGLAMATMDTIKLFGGEPANFLDVGGGATTEKVTEAFKLMLKNPGLKAILVNIFGGIMRCDVIAEGVIAGSKAVNLNVPLVVRMKGTNEDLGKKMLADSGLPIISADSMEEAAQKVVAAAAGK.

The ATP-grasp domain occupies 9-244; it reads KEILRKFGVA…LDEEDPAEIE (236 aa). Residues lysine 46, 53–55, glutamate 99, alanine 102, and glutamate 107 each bind ATP; that span reads GRG. Residues asparagine 199 and aspartate 213 each coordinate Mg(2+). Substrate-binding positions include asparagine 264 and 321-323; that span reads GIM.

It belongs to the succinate/malate CoA ligase beta subunit family. In terms of assembly, heterotetramer of two alpha and two beta subunits. It depends on Mg(2+) as a cofactor.

The enzyme catalyses succinate + ATP + CoA = succinyl-CoA + ADP + phosphate. The catalysed reaction is GTP + succinate + CoA = succinyl-CoA + GDP + phosphate. Its pathway is carbohydrate metabolism; tricarboxylic acid cycle; succinate from succinyl-CoA (ligase route): step 1/1. Its function is as follows. Succinyl-CoA synthetase functions in the citric acid cycle (TCA), coupling the hydrolysis of succinyl-CoA to the synthesis of either ATP or GTP and thus represents the only step of substrate-level phosphorylation in the TCA. The beta subunit provides nucleotide specificity of the enzyme and binds the substrate succinate, while the binding sites for coenzyme A and phosphate are found in the alpha subunit. This Burkholderia multivorans (strain ATCC 17616 / 249) protein is Succinate--CoA ligase [ADP-forming] subunit beta.